Reading from the N-terminus, the 183-residue chain is Ribosome rescue factor SmrB (183 aa).

Residues 98 to 173 (LDLHGLTQLQ…GDAALLVLIE (76 aa)) enclose the Smr domain.

The protein belongs to the SmrB family. As to quaternary structure, associates with collided ribosomes, but not with correctly translating polysomes.

Its function is as follows. Acts as a ribosome collision sensor. Detects stalled/collided disomes (pairs of ribosomes where the leading ribosome is stalled and a second ribosome has collided with it) and endonucleolytically cleaves mRNA at the 5' boundary of the stalled ribosome. Stalled/collided disomes form a new interface (primarily via the 30S subunits) that binds SmrB. Cleaved mRNA becomes available for tmRNA ligation, leading to ribosomal subunit dissociation and rescue of stalled ribosomes. The chain is Ribosome rescue factor SmrB from Shigella dysenteriae serotype 1 (strain Sd197).